The primary structure comprises 62 residues: Conotoxin Cal12.2e (62 aa).

Residues 1–19 form the signal peptide; it reads MKLTCVLVVLLLVLPFGDL.

Belongs to the conotoxin O1 superfamily. Post-translationally, contains 4 disulfide bonds. As to expression, expressed by the venom duct.

It localises to the secreted. In terms of biological role, probable neurotoxin. This is Conotoxin Cal12.2e from Californiconus californicus (California cone).